The primary structure comprises 351 residues: tRNA pseudouridine synthase D (351 aa).

The Nucleophile role is filled by Asp-81. In terms of domain architecture, TRUD spans 158–304 (GVPNYFGSQR…MRHERRAIEL (147 aa)).

It belongs to the pseudouridine synthase TruD family.

It carries out the reaction uridine(13) in tRNA = pseudouridine(13) in tRNA. Functionally, responsible for synthesis of pseudouridine from uracil-13 in transfer RNAs. This chain is tRNA pseudouridine synthase D, found in Aliivibrio fischeri (strain MJ11) (Vibrio fischeri).